Here is a 72-residue protein sequence, read N- to C-terminus: Large ribosomal subunit protein bL32 (72 aa).

This sequence belongs to the bacterial ribosomal protein bL32 family.

This Dehalococcoides mccartyi (strain ATCC BAA-2266 / KCTC 15142 / 195) (Dehalococcoides ethenogenes (strain 195)) protein is Large ribosomal subunit protein bL32.